Consider the following 320-residue polypeptide: MLKVLFAGTPDVAVPSLKLLAQDTEHFEVVAVLTRPDAPTGRGRKLVANPVKQAALELGLPVIESDPSEETFVSELAATGAQAAAVVAYGKILKQDVLDALPMGWYNLHFSLLPQWRGAAPVQRSIWAGEKVTGATVFRIVRAMDAGPILAQSTVEIGAHETAGELLGRLAEDGSHLLAASLQALADDQIAPVEQPAGAYEVAQKITVEDAHIRFDVPVFAADRQIRACTPNPGAWCELHAHADAEPATLHVLRAQPADMSNPNAPASLEPGHIVAGKKNVWVGTSTEPLELLEVKAQGKKAMRAADWARGAHLDNAFCE.

111 to 114 (SLLP) serves as a coordination point for (6S)-5,6,7,8-tetrahydrofolate.

Belongs to the Fmt family.

It carries out the reaction L-methionyl-tRNA(fMet) + (6R)-10-formyltetrahydrofolate = N-formyl-L-methionyl-tRNA(fMet) + (6S)-5,6,7,8-tetrahydrofolate + H(+). In terms of biological role, attaches a formyl group to the free amino group of methionyl-tRNA(fMet). The formyl group appears to play a dual role in the initiator identity of N-formylmethionyl-tRNA by promoting its recognition by IF2 and preventing the misappropriation of this tRNA by the elongation apparatus. The sequence is that of Methionyl-tRNA formyltransferase from Bifidobacterium adolescentis (strain ATCC 15703 / DSM 20083 / NCTC 11814 / E194a).